Consider the following 245-residue polypeptide: tRNA (guanine-N(1)-)-methyltransferase (245 aa).

S-adenosyl-L-methionine-binding positions include G111 and 131–136 (MGDYVL).

This sequence belongs to the RNA methyltransferase TrmD family. As to quaternary structure, homodimer.

The protein resides in the cytoplasm. It carries out the reaction guanosine(37) in tRNA + S-adenosyl-L-methionine = N(1)-methylguanosine(37) in tRNA + S-adenosyl-L-homocysteine + H(+). In terms of biological role, specifically methylates guanosine-37 in various tRNAs. The polypeptide is tRNA (guanine-N(1)-)-methyltransferase (Staphylococcus aureus (strain MRSA252)).